A 460-amino-acid chain; its full sequence is Hydroxymethylglutaryl-CoA synthase erg13B (460 aa).

Glu-86 acts as the Proton donor/acceptor in catalysis. Catalysis depends on Cys-120, which acts as the Acyl-thioester intermediate. Positions 120, 162, 212, 263, 272, 340, and 374 each coordinate (3S)-3-hydroxy-3-methylglutaryl-CoA. The active-site Proton donor/acceptor is His-263.

Belongs to the thiolase-like superfamily. HMG-CoA synthase family.

It catalyses the reaction acetoacetyl-CoA + acetyl-CoA + H2O = (3S)-3-hydroxy-3-methylglutaryl-CoA + CoA + H(+). Its pathway is metabolic intermediate biosynthesis; (R)-mevalonate biosynthesis; (R)-mevalonate from acetyl-CoA: step 2/3. Its function is as follows. Hydroxymethylglutaryl-CoA synthase; part of the first module of ergosterol biosynthesis pathway that includes the early steps of the pathway, conserved across all eukaryotes, and which results in the formation of mevalonate from acetyl-coenzyme A (acetyl-CoA). Erg13A and erg13B condense acetyl-CoA with acetoacetyl-CoA to form hydroxymethylglutaryl-CoA (HMG-CoA). The first module starts with the action of the cytosolic acetyl-CoA acetyltransferase erg10B that catalyzes the formation of acetoacetyl-CoA. The hydroxymethylglutaryl-CoA synthases erg13A and erg13B then condense acetyl-CoA with acetoacetyl-CoA to form HMG-CoA. The rate-limiting step of the early module is the reduction to mevalonate by the 3-hydroxy-3-methylglutaryl-coenzyme A (HMG-CoA) reductases hmg1 and hmg2. Mevalonate is also a precursor for the extracellular siderophore triacetylfusarinine C (TAFC). This is Hydroxymethylglutaryl-CoA synthase erg13B from Aspergillus fumigatus (strain ATCC MYA-4609 / CBS 101355 / FGSC A1100 / Af293) (Neosartorya fumigata).